A 442-amino-acid polypeptide reads, in one-letter code: Tubulin beta chain (442 aa).

Residues glutamine 11, glutamate 67, serine 136, glycine 140, threonine 141, glycine 142, and asparagine 202 each contribute to the GTP site. Mg(2+) is bound at residue glutamate 67.

It belongs to the tubulin family. In terms of assembly, dimer of alpha and beta chains. A typical microtubule is a hollow water-filled tube with an outer diameter of 25 nm and an inner diameter of 15 nM. Alpha-beta heterodimers associate head-to-tail to form protofilaments running lengthwise along the microtubule wall with the beta-tubulin subunit facing the microtubule plus end conferring a structural polarity. Microtubules usually have 13 protofilaments but different protofilament numbers can be found in some organisms and specialized cells. Mg(2+) is required as a cofactor.

The protein localises to the cytoplasm. It is found in the cytoskeleton. Tubulin is the major constituent of microtubules, a cylinder consisting of laterally associated linear protofilaments composed of alpha- and beta-tubulin heterodimers. Microtubules grow by the addition of GTP-tubulin dimers to the microtubule end, where a stabilizing cap forms. Below the cap, tubulin dimers are in GDP-bound state, owing to GTPase activity of alpha-tubulin. The polypeptide is Tubulin beta chain (TUBB) (Euglena gracilis).